A 465-amino-acid polypeptide reads, in one-letter code: DEAD-box ATP-dependent RNA helicase 55 (465 aa).

Positions 17-45 (FSELKPPLSEDIIEALDRSGFEVCTPVQA) match the Q motif motif. In terms of domain architecture, Helicase ATP-binding spans 48 to 219 (IPFLCSHKDV…KAGLRNPYLK (172 aa)). 61 to 68 (AATGSGKT) is a binding site for ATP. The short motif at 167 to 170 (DEAD) is the DEAD box element. A Helicase C-terminal domain is found at 228-422 (QLVHLLIENK…KDKLQQEKRG (195 aa)). The segment at 413–465 (KDKLQQEKRGKRKKSSKEAVDDSNKASRKRKLTGRQRQTIQTAQDEEEMNLRL) is disordered. Positions 428–437 (SKEAVDDSNK) are enriched in basic and acidic residues. Residues 456–465 (QDEEEMNLRL) are compositionally biased toward acidic residues.

The protein belongs to the DEAD box helicase family. DDX55/SPB4 subfamily.

The enzyme catalyses ATP + H2O = ADP + phosphate + H(+). This Arabidopsis thaliana (Mouse-ear cress) protein is DEAD-box ATP-dependent RNA helicase 55 (RH55).